The following is an 886-amino-acid chain: DNA repair and recombination protein RAD54B (886 aa).

A compositionally biased stretch (polar residues) spans methionine 1–glycine 12. The interval methionine 1–alanine 95 is disordered. A Phosphoserine modification is found at serine 14. Over residues alanine 47–cysteine 62 the composition is skewed to polar residues. Composition is skewed to basic and acidic residues over residues isoleucine 67–arginine 76 and alanine 86–alanine 95. Positions glycine 291–glycine 458 constitute a Helicase ATP-binding domain. Aspartate 304 to threonine 311 contacts ATP. The short motif at aspartate 409–histidine 412 is the DEGH box element. The 162-residue stretch at lysine 627–lysine 788 folds into the Helicase C-terminal domain.

Belongs to the SNF2/RAD54 helicase family. As to quaternary structure, interacts with RAD51 through the NH2-terminal domain.

The protein localises to the nucleus. Its function is as follows. Involved in DNA repair and mitotic recombination. May play an active role in recombination processes in concert with other members of the RAD52 epistasis group. This is DNA repair and recombination protein RAD54B (Rad54b) from Mus musculus (Mouse).